A 430-amino-acid polypeptide reads, in one-letter code: 3-phosphoshikimate 1-carboxyvinyltransferase (430 aa).

3-phosphoshikimate is bound by residues lysine 23, serine 24, and arginine 28. Residue lysine 23 participates in phosphoenolpyruvate binding. Positions 95 and 123 each coordinate phosphoenolpyruvate. Residues serine 169, glutamine 171, aspartate 315, and lysine 342 each coordinate 3-phosphoshikimate. A phosphoenolpyruvate-binding site is contributed by glutamine 171. The Proton acceptor role is filled by aspartate 315. 2 residues coordinate phosphoenolpyruvate: arginine 346 and arginine 388.

This sequence belongs to the EPSP synthase family. In terms of assembly, monomer.

It localises to the cytoplasm. It carries out the reaction 3-phosphoshikimate + phosphoenolpyruvate = 5-O-(1-carboxyvinyl)-3-phosphoshikimate + phosphate. The protein operates within metabolic intermediate biosynthesis; chorismate biosynthesis; chorismate from D-erythrose 4-phosphate and phosphoenolpyruvate: step 6/7. In terms of biological role, catalyzes the transfer of the enolpyruvyl moiety of phosphoenolpyruvate (PEP) to the 5-hydroxyl of shikimate-3-phosphate (S3P) to produce enolpyruvyl shikimate-3-phosphate and inorganic phosphate. In Streptococcus pyogenes serotype M3 (strain ATCC BAA-595 / MGAS315), this protein is 3-phosphoshikimate 1-carboxyvinyltransferase.